A 239-amino-acid polypeptide reads, in one-letter code: Protein UL20 homolog (239 aa).

A run of 3 helical transmembrane segments spans residues P65–I81, F140–V156, and L189–V208.

Belongs to the alphaherpesvirinae UL20 family. In terms of assembly, interacts with gK (via N-terminus); this interaction plays a role in the coordinate transport of UL20 and gK to the trans-Golgi network (TGN), and is required for their cell surface expression. Interacts with gB.

Its subcellular location is the virion. The protein localises to the host cell membrane. It is found in the host endosome membrane. The protein resides in the host Golgi apparatus membrane. It localises to the host nucleus membrane. Functionally, plays an essential role in egress of virus particles from the nucleus, cytoplasmic envelopment and virus-induced cell fusion. Forms a functional protein complex with gK and this interaction is absolutely essential for their coordinate intracellular transport, gK glycosylation, expression on host cell surface, and function. Together, they modulate gB-mediated virus-induced cell fusion and virion egress and therefore actively participate in these processes. The polypeptide is Protein UL20 homolog (Equus caballus (Horse)).